The following is a 567-amino-acid chain: Proline--tRNA ligase (567 aa).

Belongs to the class-II aminoacyl-tRNA synthetase family. ProS type 1 subfamily. As to quaternary structure, homodimer.

It localises to the cytoplasm. It catalyses the reaction tRNA(Pro) + L-proline + ATP = L-prolyl-tRNA(Pro) + AMP + diphosphate. Its function is as follows. Catalyzes the attachment of proline to tRNA(Pro) in a two-step reaction: proline is first activated by ATP to form Pro-AMP and then transferred to the acceptor end of tRNA(Pro). As ProRS can inadvertently accommodate and process non-cognate amino acids such as alanine and cysteine, to avoid such errors it has two additional distinct editing activities against alanine. One activity is designated as 'pretransfer' editing and involves the tRNA(Pro)-independent hydrolysis of activated Ala-AMP. The other activity is designated 'posttransfer' editing and involves deacylation of mischarged Ala-tRNA(Pro). The misacylated Cys-tRNA(Pro) is not edited by ProRS. This Fusobacterium nucleatum subsp. nucleatum (strain ATCC 25586 / DSM 15643 / BCRC 10681 / CIP 101130 / JCM 8532 / KCTC 2640 / LMG 13131 / VPI 4355) protein is Proline--tRNA ligase.